The primary structure comprises 427 residues: Transcription factor MYB98 (427 aa).

A Nuclear localization signal 1 motif is present at residues 195-202 (TRKLSSSS). HTH myb-type domains follow at residues 212-267 (KSTL…RPDI) and 268-318 (KKET…RRQF). 2 consecutive DNA-binding regions (H-T-H motif) follow at residues 240–263 (WSHI…HNHL) and 291–314 (WAEI…NATK). The Nuclear localization signal 2 signature appears at 361–368 (NKKKDVVV).

Expressed at high levels in the synergid cells of the female gametophyte, and at lower levels in the endosperm of young seeds and the trichomes of young leaves and sepals.

The protein localises to the nucleus. Functionally, transcription factor that binds to the motif 5'-GTAACNT-3' in the promoter of target genes (e.g. DD11 and DD18) and promotes their expression within synergid cells (e.g. in the filiform apparatus) in ovules. Required for the formation of the filiform apparatus during synergid cell differentiation in the female gametophyte. Involved in pollen tube guidance to the micropyle. This is Transcription factor MYB98 from Arabidopsis thaliana (Mouse-ear cress).